We begin with the raw amino-acid sequence, 222 residues long: von Willebrand factor C domain-containing protein 2-like (222 aa).

Residues 1–21 (MALHIHEACILLLVIPGLVTS) form the signal peptide. VWFC domains lie at 51-110 (KGCV…PECK) and 114-172 (NFCE…PVCK).

Peripherally associated with AMPAR complex. AMPAR complex consists of an inner core made of 4 pore-forming GluA/GRIA proteins (GRIA1, GRIA2, GRIA3 and GRIA4) and 4 major auxiliary subunits arranged in a twofold symmetry. One of the two pairs of distinct binding sites is occupied either by CNIH2, CNIH3 or CACNG2, CACNG3. The other harbors CACNG2, CACNG3, CACNG4, CACNG8 or GSG1L. This inner core of AMPAR complex is complemented by outer core constituents binding directly to the GluA/GRIA proteins at sites distinct from the interaction sites of the inner core constituents. Outer core constituents include at least PRRT1, PRRT2, CKAMP44/SHISA9, FRRS1L and NRN1. The proteins of the inner and outer core serve as a platform for other, more peripherally associated AMPAR constituents, including VWC2L. Alone or in combination, these auxiliary subunits control the gating and pharmacology of the AMPAR complex and profoundly impact their biogenesis and protein processing. As to expression, predominantly expressed in the brain (at protein level). Also detected in bones, including femur and calvaria, heart, lung and kidney. Isoform 5 is predominant in lung and heart, compared to isoforms 1 and 3. Isoform 4 is expressed in femur and calvaria at higher levels than isoforms 1 and 5. Isoforms 1 and 4 are expressed at higher levels than isoform 5 in kidney and brain.

Its subcellular location is the secreted. It localises to the synapse. Its function is as follows. May play a role in neurogenesis. May promote matrix mineralization, but has been shown to weakly, but significantly inhibit BMP2 and BMP6 activity in a preosteoblastic cell line. This chain is von Willebrand factor C domain-containing protein 2-like (Vwc2l), found in Mus musculus (Mouse).